A 428-amino-acid chain; its full sequence is MFVDQVKIYVKGGDGGNGMVAYRREKYVPKGGPAGGDGGKGADVVFIVEEGLRTLMDFRYQRHFKADRGQHGMSKGQHGRKSEDLLVKVPPGTVVKDEKTGQILADLVTHGQTAVIAKGGRGGRGNSRFATATNPAPEIAENGEPGQERDVILELKVLADVGLVGFPSVGKSTLLSVVSSARPKIAEYHFTTIVPNLGVVETGDNRSFVMADLPGLIEGAHAGVGLGHQFLRHIERTRVIVHVIDMSGLEGRDPYEDYVTINNELKEYNLRLTERPQVVVANKMDMPDAEENLQAFKEKVGDEVKIFPISAVTKQGVRDLLFEVANLIETTPEFPIHEVVDESDTSVMYKFETEGVKFDITRESDGTFVISGYDIEKTFKMTDFSRDESVRRFARQMRGMGIDEALRARGAKDGDIVKILEYEFEFID.

One can recognise an Obg domain in the interval 1–158; sequence MFVDQVKIYV…RDVILELKVL (158 aa). The OBG-type G domain maps to 159–329; that stretch reads ADVGLVGFPS…LLFEVANLIE (171 aa). Residues 165–172, 190–194, 212–215, 282–285, and 310–312 contribute to the GTP site; these read GFPSVGKS, FTTIV, DLPG, NKMD, and SAV. Ser172 and Thr192 together coordinate Mg(2+). The region spanning 350-428 is the OCT domain; sequence KFETEGVKFD…ILEYEFEFID (79 aa).

The protein belongs to the TRAFAC class OBG-HflX-like GTPase superfamily. OBG GTPase family. Monomer. It depends on Mg(2+) as a cofactor.

The protein resides in the cytoplasm. An essential GTPase which binds GTP, GDP and possibly (p)ppGpp with moderate affinity, with high nucleotide exchange rates and a fairly low GTP hydrolysis rate. Plays a role in control of the cell cycle, stress response, ribosome biogenesis and in those bacteria that undergo differentiation, in morphogenesis control. This is GTPase Obg from Bacillus thuringiensis (strain Al Hakam).